The chain runs to 250 residues: Small ribosomal subunit protein uS2 (250 aa).

The protein belongs to the universal ribosomal protein uS2 family.

This is Small ribosomal subunit protein uS2 from Variovorax paradoxus (strain S110).